The sequence spans 98 residues: UPF0390 protein zgc136864 (98 aa).

Residues 1–30 (MAQGKQKFKAQRPGGAKKHQNKPKGLKKGG) are compositionally biased toward basic residues. 2 disordered regions span residues 1–38 (MAQG…PKKA) and 63–98 (TQKA…GPSK). The span at 83–98 (KSGTAGAPKPAAGPSK) shows a compositional bias: low complexity.

This sequence belongs to the UPF0390 family.

The protein is UPF0390 protein zgc136864 of Danio rerio (Zebrafish).